The sequence spans 236 residues: DNA repair protein RecO (236 aa).

Belongs to the RecO family.

Functionally, involved in DNA repair and RecF pathway recombination. In Cellvibrio japonicus (strain Ueda107) (Pseudomonas fluorescens subsp. cellulosa), this protein is DNA repair protein RecO.